Consider the following 278-residue polypeptide: Formamidopyrimidine-DNA glycosylase (278 aa).

Residue Pro-2 is the Schiff-base intermediate with DNA of the active site. Glu-3 (proton donor) is an active-site residue. Residue Lys-58 is the Proton donor; for beta-elimination activity of the active site. His-91, Arg-109, and Arg-158 together coordinate DNA. An FPG-type zinc finger spans residues 243-277 (KVYDRKGLPCKVCKTPISQMVQGQRTTYFCSQCQK). Arg-267 functions as the Proton donor; for delta-elimination activity in the catalytic mechanism.

It belongs to the FPG family. In terms of assembly, monomer. It depends on Zn(2+) as a cofactor.

It carries out the reaction Hydrolysis of DNA containing ring-opened 7-methylguanine residues, releasing 2,6-diamino-4-hydroxy-5-(N-methyl)formamidopyrimidine.. The enzyme catalyses 2'-deoxyribonucleotide-(2'-deoxyribose 5'-phosphate)-2'-deoxyribonucleotide-DNA = a 3'-end 2'-deoxyribonucleotide-(2,3-dehydro-2,3-deoxyribose 5'-phosphate)-DNA + a 5'-end 5'-phospho-2'-deoxyribonucleoside-DNA + H(+). Its function is as follows. Involved in base excision repair of DNA damaged by oxidation or by mutagenic agents. Acts as a DNA glycosylase that recognizes and removes damaged bases. Has a preference for oxidized purines, such as 7,8-dihydro-8-oxoguanine (8-oxoG). Has AP (apurinic/apyrimidinic) lyase activity and introduces nicks in the DNA strand. Cleaves the DNA backbone by beta-delta elimination to generate a single-strand break at the site of the removed base with both 3'- and 5'-phosphates. The protein is Formamidopyrimidine-DNA glycosylase of Polynucleobacter necessarius subsp. necessarius (strain STIR1).